The following is a 377-amino-acid chain: UPF0754 membrane protein lin2327 (377 aa).

The next 2 membrane-spanning stretches (helical) occupy residues 1–21 (MSVL…GAMT) and 357–377 (YLGG…AMWI).

The protein belongs to the UPF0754 family.

It is found in the cell membrane. The chain is UPF0754 membrane protein lin2327 from Listeria innocua serovar 6a (strain ATCC BAA-680 / CLIP 11262).